The following is a 371-amino-acid chain: 2-oxoadipate dioxygenase/decarboxylase, chloroplastic (371 aa).

A chloroplast-targeting transit peptide spans 1–50 (MISLHSSAIKASLYGSFPSSLRSTLSVSFSAGSLIRLPSVGKRNLSVVVS). His-113 and Arg-117 together coordinate 2-oxoadipate. A Fe(2+)-binding site is contributed by His-113. His-250 is a Fe(2+) binding site. 2-oxoadipate is bound by residues Gln-296 and Tyr-320. Glu-322 lines the Fe(2+) pocket.

The protein belongs to the 2-oxoadipate dioxygenase/decarboxylase family. The cofactor is Fe(2+).

The protein resides in the plastid. The protein localises to the chloroplast. It catalyses the reaction 2-oxoadipate + O2 = (R)-2-hydroxyglutarate + CO2. It functions in the pathway amino-acid degradation. Its function is as follows. Catalyzes the decarboxylation and hydroxylation of 2-oxoadipate (2OA) to form D-2-hydroxyglutarate (D-2-HGA). Is involved in a D-lysine catabolic pathway. This is 2-oxoadipate dioxygenase/decarboxylase, chloroplastic from Arabidopsis thaliana (Mouse-ear cress).